The chain runs to 82 residues: Large ribosomal subunit protein bL28 (82 aa).

Positions Met1–Ser25 are disordered.

Belongs to the bacterial ribosomal protein bL28 family.

This Malacoplasma penetrans (strain HF-2) (Mycoplasma penetrans) protein is Large ribosomal subunit protein bL28.